The sequence spans 263 residues: uncharacterized protein (263 aa).

Residues 72–168 adopt a coiled-coil conformation; sequence LDKKETKELS…RTIVEIRNTK (97 aa). Positions 76–158 are disordered; it reads ETKELSKKEK…EKKEKKEKED (83 aa). Over residues 83–95 the composition is skewed to basic residues; the sequence is KEKKQLKKEKKAL. Residues 96–107 show a composition bias toward basic and acidic residues; the sequence is KKENKGGKDKKD. Residues 108–121 are compositionally biased toward basic residues; sequence KKDKKDKKDKKDKK. Composition is skewed to basic and acidic residues over residues 122–131 and 139–158; these read DKKDKGDKKD and KHDD…EKED.

This is an uncharacterized protein from Dictyostelium discoideum (Social amoeba).